The following is a 256-amino-acid chain: uncharacterized protein (256 aa).

Helical transmembrane passes span 181–201 and 231–251; these read CCIIVVAGMEGALPSVIASMV and GIAVVNIDNGFGAGVFAGLIA.

It localises to the cell membrane. This is an uncharacterized protein from Methanocaldococcus jannaschii (strain ATCC 43067 / DSM 2661 / JAL-1 / JCM 10045 / NBRC 100440) (Methanococcus jannaschii).